Reading from the N-terminus, the 228-residue chain is Small ribosomal subunit protein uS2c (228 aa).

This sequence belongs to the universal ribosomal protein uS2 family.

It localises to the plastid. The protein localises to the chloroplast. The chain is Small ribosomal subunit protein uS2c (rps2) from Mesostigma viride (Green alga).